A 356-amino-acid polypeptide reads, in one-letter code: Serine/arginine-rich splicing factor RS41 (356 aa).

RRM domains lie at 2 to 74 and 96 to 167; these read KPVF…WTKN and KTLF…YAVK. The tract at residues 73–92 is disordered; the sequence is KNDRGGAGRSGGSRRSSSGL. Residues 168–186 show a composition bias toward basic and acidic residues; the sequence is DDDSRGNGYSPERRRDRSP. Positions 168 to 356 are disordered; that stretch reads DDDSRGNGYS…SPSRSPPAEE (189 aa). 6 positions are modified to phosphoserine: Ser192, Ser194, Ser210, Ser239, Ser254, and Ser274. Residues 238–253 show a composition bias toward basic and acidic residues; it reads LSPDYKRDDRRRERVA. 3 repeat units span residues 267 to 278, 279 to 290, and 291 to 302. The 4 X 12 AA tandem repeats of [KE]-[GK]-R -[GR]-E-S-R-S-P-P-P-Y stretch occupies residues 267 to 307; that stretch reads KGRGESRSPPPYEKRRESRSPPPYEKRRESRSPPPYEKRRE. Residues 268–306 are compositionally biased toward basic and acidic residues; sequence GRGESRSPPPYEKRRESRSPPPYEKRRESRSPPPYEKRR. The stretch at 303-307 is one 4; truncated repeat; that stretch reads EKRRE. 5 positions are modified to phosphoserine: Ser309, Ser324, Ser342, Ser347, and Ser351.

Belongs to the splicing factor SR family. RS subfamily. In terms of assembly, component of the spliceosome. Interacts with RCF3 and CPL1. Interacts with DRB1/HYL1 and SE. As to expression, leaves, stem, roots and flowers.

The protein resides in the nucleus. It is found in the nucleus speckle. In terms of biological role, required for constitutive and alternative pre-mRNA splicing. Involved in primary miRNA processing and pri-miRNA biogenesis. Binds both intronless and intron-containing pri-miRNAs. In Arabidopsis thaliana (Mouse-ear cress), this protein is Serine/arginine-rich splicing factor RS41 (RS41).